We begin with the raw amino-acid sequence, 447 residues long: Alpha-1,6-mannosyl-glycoprotein 2-beta-N-acetylglucosaminyltransferase (447 aa).

At 1–9 (MRFRIYKRK) the chain is on the cytoplasmic side. Residues 10–29 (VLILTLVVAACGFVLWSSNG) traverse the membrane as a helical; Signal-anchor for type II membrane protein segment. Residues 30–447 (RQRKNEALAP…ELCKSYRRLQ (418 aa)) are Lumenal-facing. N-linked (GlcNAc...) asparagine glycans are attached at residues Asn69 and Asn86. Substrate-binding positions include 123-127 (QVHNR) and Asp154. Cysteines 196 and 210 form a disulfide. Residue 229–233 (QTKHH) coordinates substrate. Residue Asp261 participates in Mn(2+) binding. A disulfide bond links Cys283 and Cys286. Arg298 lines the substrate pocket. Disulfide bonds link Cys334–Cys357, Cys339–Cys440, and Cys378–Cys386. Residue His374 participates in Mn(2+) binding.

It belongs to the glycosyltransferase 16 (GT16) protein family. In terms of assembly, homodimer. Mn(2+) is required as a cofactor.

Its subcellular location is the golgi apparatus membrane. It catalyses the reaction an N(4)-{beta-D-GlcNAc-(1-&gt;2)-alpha-D-Man-(1-&gt;3)-[alpha-D-Man-(1-&gt;6)]-beta-D-Man-(1-&gt;4)-beta-D-GlcNAc-(1-&gt;4)-beta-D-GlcNAc}-L-asparaginyl-[protein] + UDP-N-acetyl-alpha-D-glucosamine = N(4)-{beta-D-GlcNAc-(1-&gt;2)-alpha-D-Man-(1-&gt;3)-[beta-D-GlcNAc-(1-&gt;2)-alpha-D-Man-(1-&gt;6)]-beta-D-Man-(1-&gt;4)-beta-D-GlcNAc-(1-&gt;4)-beta-D-GlcNAc}-L-asparaginyl-[protein] + UDP + H(+). The protein operates within protein modification; protein glycosylation. Functionally, plays an essential role in protein N-glycosylation. Catalyzes the transfer of N-acetylglucosamine (GlcNAc) onto the free terminal mannose moiety in the core structure of the nascent N-linked glycan chain, giving rise to the second branch in complex glycans. The sequence is that of Alpha-1,6-mannosyl-glycoprotein 2-beta-N-acetylglucosaminyltransferase (MGAT2) from Homo sapiens (Human).